The primary structure comprises 346 residues: Iron uptake protein A2 (346 aa).

The tat-type signal signal peptide spans 1–31; it reads MTTKISRRTFFVGGTALTALVVANLPRRASA. Histidine 43, tyrosine 44, tyrosine 169, tyrosine 225, and tyrosine 226 together coordinate Fe cation.

Belongs to the bacterial solute-binding protein 1 family. Post-translationally, predicted to be exported by the Tat system. The position of the signal peptide cleavage has not been experimentally proven.

It localises to the cellular thylakoid membrane. The protein resides in the periplasm. In terms of biological role, probably part of a periplasmic ABC transporter complex futA1A2BC (TC 3.A.1.10.2) involved in Fe(3+) ion import (ferric iron). This protein and futA1 (slr1295) are subunit proteins that have redundant or overlapping substrate-binding functions. The differing subcellular locations of futA1 (predominantly thylakoid lumen) and futA2 (predominantly periplasmic) suggest they may fulfill different roles. Its function is as follows. Plays an important role in protecting the acceptor side of photosystem II (PSII) against oxidative damage, especially under iron-limiting growth conditions. Plays an undefined role in copper supply to thylakoid proteins. The protein is Iron uptake protein A2 (futA2) of Synechocystis sp. (strain ATCC 27184 / PCC 6803 / Kazusa).